Consider the following 334-residue polypeptide: Biotin synthase (334 aa).

Positions 55-280 (EEIEVEGIIS…HTMLRFAGGR (226 aa)) constitute a Radical SAM core domain. Residues Cys-70, Cys-74, and Cys-77 each coordinate [4Fe-4S] cluster. [2Fe-2S] cluster is bound by residues Cys-113, Cys-205, and Arg-275.

This sequence belongs to the radical SAM superfamily. Biotin synthase family. Homodimer. The cofactor is [4Fe-4S] cluster. Requires [2Fe-2S] cluster as cofactor.

The enzyme catalyses (4R,5S)-dethiobiotin + (sulfur carrier)-SH + 2 reduced [2Fe-2S]-[ferredoxin] + 2 S-adenosyl-L-methionine = (sulfur carrier)-H + biotin + 2 5'-deoxyadenosine + 2 L-methionine + 2 oxidized [2Fe-2S]-[ferredoxin]. The protein operates within cofactor biosynthesis; biotin biosynthesis; biotin from 7,8-diaminononanoate: step 2/2. Its function is as follows. Catalyzes the conversion of dethiobiotin (DTB) to biotin by the insertion of a sulfur atom into dethiobiotin via a radical-based mechanism. The chain is Biotin synthase from Corynebacterium glutamicum (strain R).